The primary structure comprises 205 residues: SCO2-like protein RP587 (205 aa).

Cysteine 82, cysteine 86, and histidine 172 together coordinate Cu cation.

It belongs to the SCO1/2 family.

The polypeptide is SCO2-like protein RP587 (Rickettsia prowazekii (strain Madrid E)).